The chain runs to 247 residues: Acidic leucine-rich nuclear phosphoprotein 32 family member A (247 aa).

Threonine 15 is subject to Phosphothreonine. Serine 17 carries the phosphoserine modification. LRR repeat units lie at residues 18–41, 43–64, 65–87, and 89–110; these read DVKE…TDEF, ELEF…PKLN, KLKK…AEKC, and NLKH…EPLK. The LRRCT domain occupies 123–161; that stretch reads CEVTNLNAYRENVFKLLPQVMYLDGYDRDNKEAPDSDVE. The tract at residues 150-172 is necessary for tumor-suppressive function; that stretch reads RDNKEAPDSDVEGYVEDDDEEDE. Residues 150 to 247 are disordered; sequence RDNKEAPDSD…EPDDEGQEDD (98 aa). Positions 157 to 230 are enriched in acidic residues; that stretch reads DSDVEGYVED…EDEEDAAEEE (74 aa). Phosphoserine is present on residues serine 158 and serine 202. The tract at residues 165 to 247 is interaction with E4F1; that stretch reads EDDDEEDEDE…EPDDEGQEDD (83 aa).

It belongs to the ANP32 family. In terms of assembly, component of the SET complex, composed of at least ANP32A, APEX1, HMGB2, NME1, SET and TREX1. Directly interacts with SET. Interacts with ATXN1/SCA1. Interacts with MAP1B. Interacts with ELAVL1. Part of the INHAT (inhibitor of histone acetyltransferases) complex. Interacts with E4F1. Post-translationally, phosphorylated on serine residues, at least in part by casein kinase 2/CK2. Some glutamate residues are glycylated by TTLL8. This modification occurs exclusively on glutamate residues and results in a glycine chain on the gamma-carboxyl group. In terms of tissue distribution, widely distributed in the central nervous system, with an abundant expression in the cerebellum.

It is found in the nucleus. Its subcellular location is the cytoplasm. The protein resides in the endoplasmic reticulum. Its function is as follows. Multifunctional protein that is involved in the regulation of many processes including tumor suppression, apoptosis, cell cycle progression or transcription. Promotes apoptosis by favouring the activation of caspase-9/CASP9 and allowing apoptosome formation. In addition, plays a role in the modulation of histone acetylation and transcription as part of the INHAT (inhibitor of histone acetyltransferases) complex. Inhibits the histone-acetyltranferase activity of EP300/CREBBP (CREB-binding protein) and EP300/CREBBP-associated factor by histone masking. Preferentially binds to unmodified histone H3 and sterically inhibiting its acetylation and phosphorylation leading to cell growth inhibition. Participates in other biochemical processes such as regulation of mRNA nuclear-to-cytoplasmic translocation and stability by its association with ELAVL1 (Hu-antigen R). Plays a role in E4F1-mediated transcriptional repression as well as inhibition of protein phosphatase 2A. The sequence is that of Acidic leucine-rich nuclear phosphoprotein 32 family member A (Anp32a) from Rattus norvegicus (Rat).